We begin with the raw amino-acid sequence, 914 residues long: UPF0182 protein Syncc9605_1323 (914 aa).

The next 9 helical transmembrane spans lie at 4 to 24, 37 to 57, 81 to 101, 123 to 143, 152 to 172, 195 to 215, 240 to 260, 285 to 305, and 312 to 332; these read LLLL…WLWF, WLLQ…ARAW, IALL…LDLL, RIGS…MTWL, IVAA…SLAL, FAGL…TLVF, MRLI…LVWL, LPLR…LLLP, and QFLA…TPLT.

This sequence belongs to the UPF0182 family.

The protein localises to the cell membrane. This chain is UPF0182 protein Syncc9605_1323, found in Synechococcus sp. (strain CC9605).